We begin with the raw amino-acid sequence, 77 residues long: Apidermin 2 (77 aa).

The first 16 residues, 1–16 (MKSLLILFAIVAVVAA), serve as a signal peptide directing secretion.

In terms of tissue distribution, expressed in the epidermis, hypopharyngeal glands, fat body, trachea, esophagus and stomach.

Its subcellular location is the secreted. Functionally, antimicrobial peptide that binds cell wall carbohydrates of microbial symbionts and induces structural damage. Binds the cell wall carbohydrates mannan, N-acetyl-D-glucosamine and lipopolysaccharide. Can target fungi, Gram-negative and Gram-positive bacteria. The protein is Apidermin 2 of Apis mellifera (Honeybee).